The following is a 385-amino-acid chain: 3-hydroxyisobutyryl-CoA hydrolase, mitochondrial (385 aa).

Residues 1-32 constitute a mitochondrion transit peptide; the sequence is MGQPYAWRLLSRVSSFRRASVILQHLRMSMHT. An N6-acetyllysine; alternate mark is found at K54, K91, and K100. An N6-succinyllysine; alternate mark is found at K54, K91, and K100. Positions 120, 145, 168, and 176 each coordinate substrate. An N6-acetyllysine; alternate modification is found at K220. K220 is modified (N6-succinyllysine; alternate). S233 bears the Phosphoserine mark. K249 and K256 each carry N6-succinyllysine. K296 is subject to N6-acetyllysine; alternate. An N6-succinyllysine; alternate modification is found at K296. K300 is subject to N6-succinyllysine. K352 is subject to N6-acetyllysine; alternate. K352 bears the N6-succinyllysine; alternate mark. N6-acetyllysine occurs at positions 359 and 364. The residue at position 376 (K376) is an N6-succinyllysine.

This sequence belongs to the enoyl-CoA hydratase/isomerase family.

It is found in the mitochondrion. It carries out the reaction 3-hydroxy-2-methylpropanoyl-CoA + H2O = 3-hydroxy-2-methylpropanoate + CoA + H(+). It functions in the pathway amino-acid degradation; L-valine degradation. In terms of biological role, hydrolyzes 3-hydroxyisobutyryl-CoA (HIBYL-CoA), a saline catabolite. Has high activity toward isobutyryl-CoA. Could be an isobutyryl-CoA dehydrogenase that functions in valine catabolism. Also hydrolyzes 3-hydroxypropanoyl-CoA. This chain is 3-hydroxyisobutyryl-CoA hydrolase, mitochondrial (Hibch), found in Mus musculus (Mouse).